Here is a 283-residue protein sequence, read N- to C-terminus: MTKEPRFKILITNDDGIKAKGISLLVSLLRDANFADLYVVAPLEEQSGRSMAFSLIGPTAVEPFDYPQKVQEAWAVVGTPVDCVKLAIGELFKDNPPDLVLSGINNGKNSGRNLYYSATVGAIREANLHGIPAIALSQCENISFFQEAQMSSLIRALCEFTVSHKHANPLGFNVTFPASSDNSPWKGIRFTLSGDEFLFGIPRLIRTEGNRRYYTLYDMQDKVSEDLSDEYLALANNYITAVPLISKNTPLATLSEEELAFLKESFEQSVQWDSSLNFEEDLA.

4 residues coordinate a divalent metal cation: D14, D15, S47, and N105.

It belongs to the SurE nucleotidase family. A divalent metal cation serves as cofactor.

The protein resides in the cytoplasm. It catalyses the reaction a ribonucleoside 5'-phosphate + H2O = a ribonucleoside + phosphate. Its function is as follows. Nucleotidase that shows phosphatase activity on nucleoside 5'-monophosphates. The sequence is that of 5'-nucleotidase SurE from Chlamydia muridarum (strain MoPn / Nigg).